The primary structure comprises 585 residues: Regulator of gene activity (585 aa).

The span at 42 to 56 shows a compositional bias: polar residues; sequence FQTDFANSYPGTANY. Disordered stretches follow at residues 42–93, 148–191, and 349–394; these read FQTD…GNRN, GGGG…PGSK, and GVGG…KVTN. The span at 58-71 shows a compositional bias: low complexity; the sequence is QAPQQQQQQQQQPQ. Residues 166 to 184 show a composition bias toward polar residues; the sequence is PSLTNARGQNDQTLPQSNP. Over residues 349 to 367 the composition is skewed to gly residues; that stretch reads GVGGGLGSGSGSSGSGAGG. A compositionally biased stretch (polar residues) spans 372–388; that stretch reads DNSSNDKLVKSGVQTSP.

This sequence belongs to the CNOT2/3/5 family. As to quaternary structure, component of the CCR4-NOT complex composed of at least Pop2/Caf1-55, Ccr4, Not1, Rga/Not2, and Not3. In terms of tissue distribution, expressed in heterogeneous levels between adjacent germline stem cells (at protein level).

The protein localises to the cytoplasm. Functionally, component of the CCR4-NOT complex which is one of the major cellular mRNA deadenylases and is linked to various cellular processes including bulk mRNA degradation, miRNA-mediated repression, translational repression during translational initiation and general transcription regulation. Additional complex functions may be a consequence of its influence on mRNA expression. Essential for viability. Acts as a suppressor of position effect variegation (PEV) at the white locus and regulates the expression of several unrelated genes. Plays a role in germline stem cell differentiation in the ovaries. The protein is Regulator of gene activity of Drosophila melanogaster (Fruit fly).